A 132-amino-acid polypeptide reads, in one-letter code: Transcription antitermination protein NusB (132 aa).

It belongs to the NusB family.

Functionally, involved in transcription antitermination. Required for transcription of ribosomal RNA (rRNA) genes. Binds specifically to the boxA antiterminator sequence of the ribosomal RNA (rrn) operons. This is Transcription antitermination protein NusB from Campylobacter jejuni subsp. jejuni serotype O:2 (strain ATCC 700819 / NCTC 11168).